The chain runs to 435 residues: UDP-N-acetylmuramoylalanine--D-glutamate ligase (435 aa).

114–120 contributes to the ATP binding site; the sequence is GSNGKST.

The protein belongs to the MurCDEF family.

The protein localises to the cytoplasm. The catalysed reaction is UDP-N-acetyl-alpha-D-muramoyl-L-alanine + D-glutamate + ATP = UDP-N-acetyl-alpha-D-muramoyl-L-alanyl-D-glutamate + ADP + phosphate + H(+). Its pathway is cell wall biogenesis; peptidoglycan biosynthesis. Its function is as follows. Cell wall formation. Catalyzes the addition of glutamate to the nucleotide precursor UDP-N-acetylmuramoyl-L-alanine (UMA). The polypeptide is UDP-N-acetylmuramoylalanine--D-glutamate ligase (Haemophilus ducreyi (strain 35000HP / ATCC 700724)).